A 486-amino-acid polypeptide reads, in one-letter code: Cardiolipin synthase A (486 aa).

A run of 2 helical transmembrane segments spans residues 3-23 and 38-58; these read TFYT…IAGV and MAWL…YLSV. 2 consecutive PLD phosphodiesterase domains span residues 219–246 and 399–426; these read MDLR…VDPR and EGGL…DMRS. Active-site residues include H224, K226, D231, H404, K406, and D411.

It belongs to the phospholipase D family. Cardiolipin synthase subfamily. ClsA sub-subfamily.

The protein resides in the cell inner membrane. It catalyses the reaction 2 a 1,2-diacyl-sn-glycero-3-phospho-(1'-sn-glycerol) = a cardiolipin + glycerol. Functionally, catalyzes the reversible phosphatidyl group transfer from one phosphatidylglycerol molecule to another to form cardiolipin (CL) (diphosphatidylglycerol) and glycerol. The sequence is that of Cardiolipin synthase A from Salmonella paratyphi A (strain ATCC 9150 / SARB42).